We begin with the raw amino-acid sequence, 854 residues long: ATP-dependent zinc metalloprotease FtsH (854 aa).

At Met-1–Thr-5 the chain is on the cytoplasmic side. A helical membrane pass occupies residues Val-6–Phe-26. Topologically, residues Ser-27–Trp-112 are extracellular. A helical membrane pass occupies residues Leu-113 to Val-133. The Cytoplasmic segment spans residues Met-134–Arg-854. Gly-207 to Thr-214 is an ATP binding site. His-429 is a Zn(2+) binding site. Glu-430 is an active-site residue. Zn(2+)-binding residues include His-433 and Asp-505. A disordered region spans residues Ala-658–Arg-854. 2 stretches are compositionally biased toward low complexity: residues Pro-661–Ser-692 and Ala-698–Pro-719. A compositionally biased stretch (pro residues) spans Gly-720–Thr-730. The span at Asn-749–Gln-778 shows a compositional bias: low complexity. The span at Gly-812–Ser-822 shows a compositional bias: polar residues. Residues Pro-825 to His-834 are compositionally biased toward pro residues.

This sequence in the central section; belongs to the AAA ATPase family. It in the C-terminal section; belongs to the peptidase M41 family. In terms of assembly, homohexamer. Requires Zn(2+) as cofactor.

It is found in the cell membrane. Acts as a processive, ATP-dependent zinc metallopeptidase for both cytoplasmic and membrane proteins. Plays a role in the quality control of integral membrane proteins. In Rhodococcus erythropolis (strain PR4 / NBRC 100887), this protein is ATP-dependent zinc metalloprotease FtsH.